Consider the following 238-residue polypeptide: 1-(5-phosphoribosyl)-5-[(5-phosphoribosylamino)methylideneamino] imidazole-4-carboxamide isomerase (238 aa).

The Proton acceptor role is filled by Asp-8. Asp-129 serves as the catalytic Proton donor.

Belongs to the HisA/HisF family.

It is found in the cytoplasm. It catalyses the reaction 1-(5-phospho-beta-D-ribosyl)-5-[(5-phospho-beta-D-ribosylamino)methylideneamino]imidazole-4-carboxamide = 5-[(5-phospho-1-deoxy-D-ribulos-1-ylimino)methylamino]-1-(5-phospho-beta-D-ribosyl)imidazole-4-carboxamide. It functions in the pathway amino-acid biosynthesis; L-histidine biosynthesis; L-histidine from 5-phospho-alpha-D-ribose 1-diphosphate: step 4/9. This Paracoccus denitrificans (strain Pd 1222) protein is 1-(5-phosphoribosyl)-5-[(5-phosphoribosylamino)methylideneamino] imidazole-4-carboxamide isomerase.